Here is a 210-residue protein sequence, read N- to C-terminus: UPF0301 protein Mnod_6933 (210 aa).

This sequence belongs to the UPF0301 (AlgH) family.

The chain is UPF0301 protein Mnod_6933 from Methylobacterium nodulans (strain LMG 21967 / CNCM I-2342 / ORS 2060).